Consider the following 85-residue polypeptide: Large ribosomal subunit protein bL31 (85 aa).

The disordered stretch occupies residues Lys-64–Lys-85.

The protein belongs to the bacterial ribosomal protein bL31 family. Type A subfamily. As to quaternary structure, part of the 50S ribosomal subunit.

Functionally, binds the 23S rRNA. This Acaryochloris marina (strain MBIC 11017) protein is Large ribosomal subunit protein bL31.